The primary structure comprises 122 residues: Ribosome-binding factor A (122 aa).

Belongs to the RbfA family. Monomer. Binds 30S ribosomal subunits, but not 50S ribosomal subunits or 70S ribosomes.

It localises to the cytoplasm. Its function is as follows. One of several proteins that assist in the late maturation steps of the functional core of the 30S ribosomal subunit. Associates with free 30S ribosomal subunits (but not with 30S subunits that are part of 70S ribosomes or polysomes). Required for efficient processing of 16S rRNA. May interact with the 5'-terminal helix region of 16S rRNA. This chain is Ribosome-binding factor A, found in Caldanaerobacter subterraneus subsp. tengcongensis (strain DSM 15242 / JCM 11007 / NBRC 100824 / MB4) (Thermoanaerobacter tengcongensis).